A 309-amino-acid chain; its full sequence is Genome polyprotein (309 aa).

Topologically, residues 1 to 40 (GFADLMGYIPLVGAPLGGAARALAHGVRVLEDGVNYATGN) are cytoplasmic. The tract at residues 36-39 (YATG) is important for lipid droplets localization. The helical transmembrane segment at 41-61 (LPGCSFSIFLLALLSCLTVPA) threads the bilayer. The propeptide at 50–63 (LLALLSCLTVPASA) is ER anchor for the core protein, removed in mature form by host signal peptidase. Residues 62–230 (SAYQVRNSSG…AGAHWGVLAG (169 aa)) lie on the Lumenal side of the membrane. Residues Asn-68, Asn-81, and Asn-106 are each glycosylated (N-linked (GlcNAc...) asparagine; by host). The segment at 137 to 168 (LVGSATLCSALYVGDLCGSVFLVGQLFTFSPR) is important for fusion. A glycan (N-linked (GlcNAc...) asparagine; by host) is linked at Asn-177. A helical transmembrane segment spans residues 231–251 (IAYFSMVGNWAKVLVVLLLFA). Topologically, residues 252–309 (GVDATTYTTGGNAARTTQALTSFFSPGAKQDIQLINTNGSWHINRTALNCNASLDTGW) are lumenal. Residues 256–282 (TTYTTGGNAARTTQALTSFFSPGAKQD) form an HVR1 region. N-linked (GlcNAc...) (high mannose) asparagine; by host glycans are attached at residues Asn-289, Asn-295, and Asn-302.

It belongs to the hepacivirus polyprotein family. As to quaternary structure, homooligomer. Interacts with E1 (via C-terminus). Interacts with the non-structural protein 5A. Interacts (via N-terminus) with host STAT1 (via SH2 domain); this interaction results in decreased STAT1 phosphorylation and ubiquitin-mediated proteasome-dependent STAT1 degradation, leading to decreased IFN-stimulated gene transcription. Interacts with host STAT3; this interaction constitutively activates STAT3. Interacts with host LTBR receptor. Interacts with host TNFRSF1A receptor and possibly induces apoptosis. Interacts with host HNRPK. Interacts with host YWHAE. Interacts with host UBE3A/E6AP. Interacts with host DDX3X. Interacts with host APOA2. Interacts with host RXRA protein. Interacts with host SP110 isoform 3/Sp110b; this interaction sequesters the transcriptional corepressor SP110 away from the nucleus. Interacts with host CREB3 nuclear transcription protein; this interaction triggers cell transformation. Interacts with host ACY3. Interacts with host C1QR1. Interacts with host RBM24; this interaction, which enhances the interaction of the mature core protein with 5'-UTR, may inhibit viral translation and favor replication. Interacts with host EIF2AK2/PKR; this interaction induces the autophosphorylation of EIF2AK2. Part of the viral assembly initiation complex composed of NS2, E1, E2, NS3, NS4A, NS5A and the mature core protein. Forms a heterodimer with envelope glycoprotein E2. Interacts with mature core protein. Interacts with protease NS2. The heterodimer E1/E2 interacts with host CLDN1; this interaction plays a role in viral entry into host cell. Interacts with host SPSB2 (via C-terminus). Part of the viral assembly initiation complex composed of NS2, E1, E2, NS3, NS4A, NS5A and the mature core protein. In terms of assembly, forms a heterodimer with envelope glycoprotein E1. Interacts with host CD81 and SCARB1 receptors; these interactions play a role in viral entry into host cell. Interacts with host EIF2AK2/PKR; this interaction inhibits EIF2AK2 and probably allows the virus to evade the innate immune response. Interacts with host CD209/DC-SIGN and CLEC4M/DC-SIGNR. Interact with host SPCS1; this interaction is essential for viral particle assembly. Interacts with protease NS2. The heterodimer E1/E2 interacts with host CLDN1; this interaction plays a role in viral entry into host cell. Part of the viral assembly initiation complex composed of NS2, E1, E2, NS3, NS4A, NS5A and the mature core protein. In terms of processing, specific enzymatic cleavages in vivo yield mature proteins. The structural proteins, core, E1, E2 and p7 are produced by proteolytic processing by host signal peptidases. The core protein precursor is synthesized as a 23 kDa, which is retained in the ER membrane through the hydrophobic signal peptide. Cleavage by the signal peptidase releases the 21 kDa mature core protein. The cleavage of the core protein precursor occurs between aminoacids 176 and 188 but the exact cleavage site is not known. Some degraded forms of the core protein appear as well during the course of infection. The other proteins (p7, NS2, NS3, NS4A, NS4B, NS5A and NS5B) are cleaved by the viral proteases. Autoprocessing between NS2 and NS3 is mediated by the NS2 cysteine protease catalytic domain and regulated by the NS3 N-terminal domain. Post-translationally, phosphorylated by host PKC and PKA. Ubiquitinated; mediated by UBE3A and leading to core protein subsequent proteasomal degradation. In terms of processing, highly N-glycosylated.

Its subcellular location is the host endoplasmic reticulum membrane. The protein localises to the host mitochondrion membrane. The protein resides in the virion. It is found in the host cytoplasm. It localises to the host nucleus. Its subcellular location is the host lipid droplet. The protein localises to the virion membrane. Packages viral RNA to form a viral nucleocapsid, and promotes virion budding. Participates in the viral particle production as a result of its interaction with the non-structural protein 5A. Binds RNA and may function as a RNA chaperone to induce the RNA structural rearrangements taking place during virus replication. Modulates viral translation initiation by interacting with viral IRES and 40S ribosomal subunit. Affects various cell signaling pathways, host immunity and lipid metabolism. Prevents the establishment of cellular antiviral state by blocking the interferon-alpha/beta (IFN-alpha/beta) and IFN-gamma signaling pathways and by blocking the formation of phosphorylated STAT1 and promoting ubiquitin-mediated proteasome-dependent degradation of STAT1. Activates STAT3 leading to cellular transformation. Regulates the activity of cellular genes, including c-myc and c-fos. May repress the promoter of p53, and sequester CREB3 and SP110 isoform 3/Sp110b in the cytoplasm. Represses cell cycle negative regulating factor CDKN1A, thereby interrupting an important check point of normal cell cycle regulation. Targets transcription factors involved in the regulation of inflammatory responses and in the immune response: suppresses TNF-induced NF-kappa-B activation, and activates AP-1. Binds to dendritic cells (DCs) via C1QR1, resulting in down-regulation of T-lymphocytes proliferation. Alters lipid metabolism by interacting with hepatocellular proteins involved in lipid accumulation and storage. Induces up-regulation of FAS promoter activity, and thereby contributes to the increased triglyceride accumulation in hepatocytes (steatosis). In terms of biological role, forms a heterodimer with envelope glycoprotein E2, which mediates virus attachment to the host cell, virion internalization through clathrin-dependent endocytosis and fusion with host membrane. Fusion with the host cell is most likely mediated by both E1 and E2, through conformational rearrangements of the heterodimer required for fusion rather than a classical class II fusion mechanism. E1/E2 heterodimer binds host apolipoproteins such as APOB and ApoE thereby forming a lipo-viro-particle (LVP). APOE associated to the LVP allows the initial virus attachment to cell surface receptors such as the heparan sulfate proteoglycans (HSPGs), syndecan-1 (SDC1), syndecan-1 (SDC2), the low-density lipoprotein receptor (LDLR) and scavenger receptor class B type I (SCARB1). The cholesterol transfer activity of SCARB1 allows E2 exposure and binding of E2 to SCARB1 and the tetraspanin CD81. E1/E2 heterodimer binding on CD81 activates the epithelial growth factor receptor (EGFR) signaling pathway. Diffusion of the complex E1-E2-EGFR-SCARB1-CD81 to the cell lateral membrane allows further interaction with Claudin 1 (CLDN1) and occludin (OCLN) to finally trigger HCV entry. Functionally, forms a heterodimer with envelope glycoprotein E1, which mediates virus attachment to the host cell, virion internalization through clathrin-dependent endocytosis and fusion with host membrane. Fusion with the host cell is most likely mediated by both E1 and E2, through conformational rearrangements of the heterodimer required for fusion rather than a classical class II fusion mechanism. The interaction between envelope glycoprotein E2 and host apolipoprotein E/APOE allows the proper assembly, maturation and infectivity of the viral particles. This interaction is probably promoted via the up-regulation of cellular autophagy by the virus. E1/E2 heterodimer binds host apolipoproteins such as APOB and APOE thereby forming a lipo-viro-particle (LVP). APOE associated to the LVP allows the initial virus attachment to cell surface receptors such as the heparan sulfate proteoglycans (HSPGs), syndecan-1 (SDC1), syndecan-1 (SDC2), the low-density lipoprotein receptor (LDLR) and scavenger receptor class B type I (SCARB1). The cholesterol transfer activity of SCARB1 allows E2 exposure and binding of E2 to SCARB1 and the tetraspanin CD81. E1/E2 heterodimer binding on CD81 activates the epithelial growth factor receptor (EGFR) signaling pathway. Diffusion of the complex E1-E2-EGFR-SCARB1-CD81 to the cell lateral membrane allows further interaction with Claudin 1 (CLDN1) and occludin (OCLN) to finally trigger HCV entry. Inhibits host EIF2AK2/PKR activation, preventing the establishment of an antiviral state. Viral ligand for CD209/DC-SIGN and CLEC4M/DC-SIGNR, which are respectively found on dendritic cells (DCs), and on liver sinusoidal endothelial cells and macrophage-like cells of lymph node sinuses. These interactions allow the capture of circulating HCV particles by these cells and subsequent facilitated transmission to permissive cells such as hepatocytes and lymphocyte subpopulations. The protein is Genome polyprotein of Hepatitis C virus (isolate HCT27) (HCV).